A 131-amino-acid polypeptide reads, in one-letter code: Peptide methionine sulfoxide reductase MsrB (131 aa).

Residues 8–130 enclose the MsrB domain; it reads LEEWRAMLDP…NSVCLDLVPR (123 aa). Positions 47, 50, 96, and 99 each coordinate Zn(2+). Catalysis depends on cysteine 119, which acts as the Nucleophile.

The protein belongs to the MsrB Met sulfoxide reductase family. Requires Zn(2+) as cofactor.

It carries out the reaction L-methionyl-[protein] + [thioredoxin]-disulfide + H2O = L-methionyl-(R)-S-oxide-[protein] + [thioredoxin]-dithiol. This is Peptide methionine sulfoxide reductase MsrB from Pseudomonas fluorescens (strain Pf0-1).